The sequence spans 1025 residues: Beta-galactosidase (1025 aa).

The substrate site is built by N103 and D202. Residue D202 coordinates Na(+). Residues E417, H419, and E462 each contribute to the Mg(2+) site. Substrate-binding positions include E462 and 538–541; that span reads EYAH. E462 functions as the Proton donor in the catalytic mechanism. E538 (nucleophile) is an active-site residue. A Mg(2+)-binding site is contributed by N598. F602 and N605 together coordinate Na(+). Substrate contacts are provided by N605 and W1003.

The protein belongs to the glycosyl hydrolase 2 family. In terms of assembly, homotetramer. It depends on Mg(2+) as a cofactor. Na(+) is required as a cofactor.

It carries out the reaction Hydrolysis of terminal non-reducing beta-D-galactose residues in beta-D-galactosides.. The polypeptide is Beta-galactosidase (Citrobacter koseri (strain ATCC BAA-895 / CDC 4225-83 / SGSC4696)).